A 202-amino-acid chain; its full sequence is uncharacterized protein (202 aa).

Helical transmembrane passes span 34–54 (AAYV…QARI), 102–122 (MGVA…PLVI), and 125–145 (ILPL…FNKA). The interval 165-202 (NKPAAAVTGTSSNSNNASAKSDGPTITELNENETEKSS) is disordered. A compositionally biased stretch (low complexity) spans 168–185 (AAAVTGTSSNSNNASAKS). Residues Ser185 and Ser201 each carry the phosphoserine modification.

Belongs to the PHO88 family.

It is found in the endoplasmic reticulum membrane. This is an uncharacterized protein from Schizosaccharomyces pombe (strain 972 / ATCC 24843) (Fission yeast).